Reading from the N-terminus, the 215-residue chain is Phosphatidylserine decarboxylase proenzyme (215 aa).

Residue S185 is the Schiff-base intermediate with substrate; via pyruvic acid of the active site. S185 bears the Pyruvic acid (Ser); by autocatalysis mark.

Belongs to the phosphatidylserine decarboxylase family. PSD-A subfamily. In terms of assembly, heterodimer of a large membrane-associated beta subunit and a small pyruvoyl-containing alpha subunit. Requires pyruvate as cofactor. Post-translationally, is synthesized initially as an inactive proenzyme. Formation of the active enzyme involves a self-maturation process in which the active site pyruvoyl group is generated from an internal serine residue via an autocatalytic post-translational modification. Two non-identical subunits are generated from the proenzyme in this reaction, and the pyruvate is formed at the N-terminus of the alpha chain, which is derived from the carboxyl end of the proenzyme. The post-translation cleavage follows an unusual pathway, termed non-hydrolytic serinolysis, in which the side chain hydroxyl group of the serine supplies its oxygen atom to form the C-terminus of the beta chain, while the remainder of the serine residue undergoes an oxidative deamination to produce ammonia and the pyruvoyl prosthetic group on the alpha chain.

The protein localises to the cell membrane. The catalysed reaction is a 1,2-diacyl-sn-glycero-3-phospho-L-serine + H(+) = a 1,2-diacyl-sn-glycero-3-phosphoethanolamine + CO2. It functions in the pathway phospholipid metabolism; phosphatidylethanolamine biosynthesis; phosphatidylethanolamine from CDP-diacylglycerol: step 2/2. Its function is as follows. Catalyzes the formation of phosphatidylethanolamine (PtdEtn) from phosphatidylserine (PtdSer). The chain is Phosphatidylserine decarboxylase proenzyme from Streptomyces avermitilis (strain ATCC 31267 / DSM 46492 / JCM 5070 / NBRC 14893 / NCIMB 12804 / NRRL 8165 / MA-4680).